The following is an 83-amino-acid chain: Erabutoxin c (83 aa).

The first 21 residues, 1–21 (MKTLLLTLVVVTIVCLDLGYT), serve as a signal peptide directing secretion. Residues 24–38 (CFNHQSSQPQTTKTC) form a loop I region. Cystine bridges form between Cys-24–Cys-45, Cys-38–Cys-62, Cys-64–Cys-75, and Cys-76–Cys-81. The segment at 39 to 44 (SPGESS) is stretch between loop I and loop II. Residues 45-62 (CYHKQWSDFRGTIIERGC) are loop II. The tract at residues 64-75 (CPTVKPGINLSC) is loop III.

This sequence belongs to the three-finger toxin family. Short-chain subfamily. Type I alpha-neurotoxin sub-subfamily. In terms of tissue distribution, expressed by the venom gland.

The protein localises to the secreted. Binds to muscle nicotinic acetylcholine receptor (nAChR) and inhibit acetylcholine from binding to the receptor, thereby impairing neuromuscular transmission. Binds to Torpedo marmorata nAChR (Kd=0.14 nM). In Laticauda semifasciata (Black-banded sea krait), this protein is Erabutoxin c.